Reading from the N-terminus, the 211-residue chain is NADH-quinone oxidoreductase subunit I (211 aa).

A disordered region spans residues 21–41 (PTTEQYPEQKKETAPRFHGRH). 4Fe-4S ferredoxin-type domains lie at 43-73 (LNRH…VEGA) and 89-118 (RVYQ…MSND). [4Fe-4S] cluster contacts are provided by cysteine 53, cysteine 56, cysteine 59, cysteine 63, cysteine 98, cysteine 101, cysteine 104, and cysteine 108. A disordered region spans residues 141–211 (RAGMESPPHP…AHGAGSERPR (71 aa)). Positions 152–166 (RLGESETDYYTRDPD) are enriched in basic and acidic residues. A compositionally biased stretch (acidic residues) spans 179–191 (DEADEAGEAGEAG). Over residues 192–211 (EAERAADKVPAHGAGSERPR) the composition is skewed to basic and acidic residues.

It belongs to the complex I 23 kDa subunit family. NDH-1 is composed of 14 different subunits. Subunits NuoA, H, J, K, L, M, N constitute the membrane sector of the complex. [4Fe-4S] cluster serves as cofactor.

The protein localises to the cell membrane. It carries out the reaction a quinone + NADH + 5 H(+)(in) = a quinol + NAD(+) + 4 H(+)(out). Functionally, NDH-1 shuttles electrons from NADH, via FMN and iron-sulfur (Fe-S) centers, to quinones in the respiratory chain. The immediate electron acceptor for the enzyme in this species is believed to be ubiquinone. Couples the redox reaction to proton translocation (for every two electrons transferred, four hydrogen ions are translocated across the cytoplasmic membrane), and thus conserves the redox energy in a proton gradient. In Parafrankia sp. (strain EAN1pec), this protein is NADH-quinone oxidoreductase subunit I.